The following is a 267-amino-acid chain: Hydroxyethylthiazole kinase 2 (267 aa).

Met-41 provides a ligand contact to substrate. Positions 116 and 166 each coordinate ATP. A substrate-binding site is contributed by Gly-193.

The protein belongs to the Thz kinase family. It depends on Mg(2+) as a cofactor.

It carries out the reaction 5-(2-hydroxyethyl)-4-methylthiazole + ATP = 4-methyl-5-(2-phosphooxyethyl)-thiazole + ADP + H(+). It participates in cofactor biosynthesis; thiamine diphosphate biosynthesis; 4-methyl-5-(2-phosphoethyl)-thiazole from 5-(2-hydroxyethyl)-4-methylthiazole: step 1/1. Its function is as follows. Catalyzes the phosphorylation of the hydroxyl group of 4-methyl-5-beta-hydroxyethylthiazole (THZ). This chain is Hydroxyethylthiazole kinase 2, found in Streptococcus pneumoniae (strain Taiwan19F-14).